The following is a 514-amino-acid chain: 2,3-bisphosphoglycerate-independent phosphoglycerate mutase (514 aa).

Positions 14 and 64 each coordinate Mn(2+). The active-site Phosphoserine intermediate is the Ser-64. Substrate contacts are provided by residues His-125, 155–156 (RD), Arg-187, Arg-193, 263–266 (RADR), and Lys-336. Residues Asp-403, His-407, Asp-444, His-445, and His-463 each coordinate Mn(2+).

Belongs to the BPG-independent phosphoglycerate mutase family. As to quaternary structure, monomer. Mn(2+) is required as a cofactor.

It carries out the reaction (2R)-2-phosphoglycerate = (2R)-3-phosphoglycerate. It functions in the pathway carbohydrate degradation; glycolysis; pyruvate from D-glyceraldehyde 3-phosphate: step 3/5. Its function is as follows. Catalyzes the interconversion of 2-phosphoglycerate and 3-phosphoglycerate. The polypeptide is 2,3-bisphosphoglycerate-independent phosphoglycerate mutase (Shewanella sp. (strain MR-7)).